A 349-amino-acid polypeptide reads, in one-letter code: Protein RecA (349 aa).

Residue 65 to 72 (GPESSGKT) participates in ATP binding.

The protein belongs to the RecA family.

It localises to the cytoplasm. Functionally, can catalyze the hydrolysis of ATP in the presence of single-stranded DNA, the ATP-dependent uptake of single-stranded DNA by duplex DNA, and the ATP-dependent hybridization of homologous single-stranded DNAs. It interacts with LexA causing its activation and leading to its autocatalytic cleavage. The protein is Protein RecA of Clostridium acetobutylicum (strain ATCC 824 / DSM 792 / JCM 1419 / IAM 19013 / LMG 5710 / NBRC 13948 / NRRL B-527 / VKM B-1787 / 2291 / W).